The primary structure comprises 26 residues: GTGITEEFEEVPVQSRGFGILDVGYR.

This sequence belongs to the Ycf48 family.

The protein localises to the plastid. It localises to the chloroplast thylakoid lumen. Its function is as follows. Essential for photosystem II (PSII) biogenesis; required for assembly of an early intermediate in PSII assembly that includes D2 (psbD) and cytochrome b559. This is Photosystem II stability/assembly factor HCF136, chloroplastic from Populus euphratica (Euphrates poplar).